The chain runs to 388 residues: Putative 8-amino-7-oxononanoate synthase (388 aa).

Arginine 22 is a substrate binding site. Residue 109–110 (GY) participates in pyridoxal 5'-phosphate binding. Histidine 134 lines the substrate pocket. Residues serine 182, 207 to 210 (DEAH), and 237 to 240 (TLSK) each bind pyridoxal 5'-phosphate. Lysine 240 bears the N6-(pyridoxal phosphate)lysine mark. Position 354 (threonine 354) interacts with substrate.

The protein belongs to the class-II pyridoxal-phosphate-dependent aminotransferase family. BioF subfamily. As to quaternary structure, homodimer. It depends on pyridoxal 5'-phosphate as a cofactor.

It catalyses the reaction 6-carboxyhexanoyl-[ACP] + L-alanine + H(+) = (8S)-8-amino-7-oxononanoate + holo-[ACP] + CO2. It functions in the pathway cofactor biosynthesis; biotin biosynthesis. Its function is as follows. Catalyzes the decarboxylative condensation of pimeloyl-[acyl-carrier protein] and L-alanine to produce 8-amino-7-oxononanoate (AON), [acyl-carrier protein], and carbon dioxide. This is Putative 8-amino-7-oxononanoate synthase (bioF) from Gloeobacter violaceus (strain ATCC 29082 / PCC 7421).